Consider the following 907-residue polypeptide: Envelope glycoprotein B (907 aa).

The signal sequence occupies residues 1–22 (MESRIWCLVVCVNLCIVCLGAA). Over 23–751 (VSSSSTRGTS…EGVATFLKNP (729 aa)) the chain is Virion surface. The segment at 29–62 (RGTSATHSHHSSHTTSAAHSRSGSVSQRVTSSQT) is disordered. The span at 41–62 (HTTSAAHSRSGSVSQRVTSSQT) shows a compositional bias: low complexity. N-linked (GlcNAc...) asparagine; by host glycans are attached at residues N68, N73, and N85. 4 disulfide bridges follow: C94/C551, C111/C507, C185/C250, and C344/C391. The tract at residues 152–158 (SYAYIHT) is involved in fusion and/or binding to host membrane. An N-linked (GlcNAc...) asparagine; by host glycan is attached at N208. The segment at 237 to 244 (GSTWLYRE) is involved in fusion and/or binding to host membrane. Residues N281, N286, N302, N341, N383, N405, N409, N417, N447, N452, N456, N466, N555, and N586 are each glycosylated (N-linked (GlcNAc...) asparagine; by host). An intrachain disulfide couples C574 to C611. Hydrophobic membrane proximal region stretches follow at residues 697–749 (VEDK…TFLK) and 708–748 (YLKG…ATFL). The helical transmembrane segment at 752–772 (FGAFTIILVAIAVVIIIYLIY) threads the bilayer. Over 773–907 (TRQRRLCMQP…LKDSDEEENV (135 aa)) the chain is Intravirion. 2 stretches are compositionally biased toward polar residues: residues 798-810 (VTSG…SLQA) and 860-877 (RAQQ…GTQD). Disordered regions lie at residues 798–838 (VTSG…TAAP) and 860–907 (RAQQ…EENV). Residues 878–887 (KGQKPNLLDR) are compositionally biased toward basic and acidic residues. The Internalization motif signature appears at 895–898 (YRHL).

This sequence belongs to the herpesviridae glycoprotein B family. Homotrimer; disulfide-linked. Binds to heparan sulfate proteoglycans. Interacts with gH/gL heterodimer. Interacts with host C-type lectin CD209/DC-SIGN. Interacts with host ITGB1, EGFR, and PDGFRA. In terms of processing, a proteolytic cleavage by host furin generates two subunits that remain linked by disulfide bonds.

The protein localises to the virion membrane. Its subcellular location is the host cell membrane. The protein resides in the host endosome membrane. It localises to the host Golgi apparatus membrane. Envelope glycoprotein that plays a role in host cell entry, cell to-cell virus transmission, and fusion of infected cells. May be involved in the initial attachment via binding to heparan sulfate together with the gM/gN complex that binds heparin with higher affinity. Interacts with host integrin ITGB1, PDGFRA and EGFR that likely serve as postattachment entry receptors. Also participates in the fusion of viral and cellular membranes leading to virus entry into the host cell. Membrane fusion is mediated by the fusion machinery composed at least of gB and the heterodimer gH/gL. The chain is Envelope glycoprotein B from Homo sapiens (Human).